A 137-amino-acid chain; its full sequence is Small ribosomal subunit protein uS12 (137 aa).

Disordered regions lie at residues 1-22 (MPTI…SKSP) and 37-57 (KNPS…TPKK). A compositionally biased stretch (basic residues) spans 9-19 (RKGRKSHKGKS). D102 carries the 3-methylthioaspartic acid modification.

This sequence belongs to the universal ribosomal protein uS12 family. Part of the 30S ribosomal subunit. Contacts proteins S8 and S17. May interact with IF1 in the 30S initiation complex.

In terms of biological role, with S4 and S5 plays an important role in translational accuracy. Functionally, interacts with and stabilizes bases of the 16S rRNA that are involved in tRNA selection in the A site and with the mRNA backbone. Located at the interface of the 30S and 50S subunits, it traverses the body of the 30S subunit contacting proteins on the other side and probably holding the rRNA structure together. The combined cluster of proteins S8, S12 and S17 appears to hold together the shoulder and platform of the 30S subunit. The protein is Small ribosomal subunit protein uS12 of Limosilactobacillus fermentum (strain NBRC 3956 / LMG 18251) (Lactobacillus fermentum).